We begin with the raw amino-acid sequence, 1059 residues long: Carbamoyl phosphate synthase large chain (1059 aa).

The tract at residues 1 to 401 (MPKRQDISKI…AMLKAVRSLE (401 aa)) is carboxyphosphate synthetic domain. Positions 129, 169, 175, 176, 208, 210, 215, 241, 242, 243, 284, and 298 each coordinate ATP. Residues 133–327 (KALMERLNEP…IAKMAAKIAV (195 aa)) form the ATP-grasp 1 domain. Positions 284, 298, and 300 each coordinate Mg(2+). Residues Q284, E298, and N300 each coordinate Mn(2+). Residues 402 to 546 (IGAIGLDDIT…YATYEQENES (145 aa)) are oligomerization domain. A carbamoyl phosphate synthetic domain region spans residues 547–929 (IISTKKSVLV…ALYKAFIASN (383 aa)). The ATP-grasp 2 domain maps to 671–861 (DQVIKELALP…LAQLATRVML (191 aa)). Positions 707, 746, 748, 752, 777, 778, 779, 780, 820, and 832 each coordinate ATP. Positions 820, 832, and 834 each coordinate Mg(2+). Residues Q820, E832, and N834 each contribute to the Mn(2+) site. In terms of domain architecture, MGS-like spans 930–1059 (IKVPRYGNVL…SRSFTVKEMH (130 aa)). Positions 930-1059 (IKVPRYGNVL…SRSFTVKEMH (130 aa)) are allosteric domain.

It belongs to the CarB family. In terms of assembly, composed of two chains; the small (or glutamine) chain promotes the hydrolysis of glutamine to ammonia, which is used by the large (or ammonia) chain to synthesize carbamoyl phosphate. Tetramer of heterodimers (alpha,beta)4. Mg(2+) serves as cofactor. The cofactor is Mn(2+).

It carries out the reaction hydrogencarbonate + L-glutamine + 2 ATP + H2O = carbamoyl phosphate + L-glutamate + 2 ADP + phosphate + 2 H(+). The enzyme catalyses hydrogencarbonate + NH4(+) + 2 ATP = carbamoyl phosphate + 2 ADP + phosphate + 2 H(+). It functions in the pathway amino-acid biosynthesis; L-arginine biosynthesis; carbamoyl phosphate from bicarbonate: step 1/1. It participates in pyrimidine metabolism; UMP biosynthesis via de novo pathway; (S)-dihydroorotate from bicarbonate: step 1/3. In terms of biological role, large subunit of the glutamine-dependent carbamoyl phosphate synthetase (CPSase). CPSase catalyzes the formation of carbamoyl phosphate from the ammonia moiety of glutamine, carbonate, and phosphate donated by ATP, constituting the first step of 2 biosynthetic pathways, one leading to arginine and/or urea and the other to pyrimidine nucleotides. The large subunit (synthetase) binds the substrates ammonia (free or transferred from glutamine from the small subunit), hydrogencarbonate and ATP and carries out an ATP-coupled ligase reaction, activating hydrogencarbonate by forming carboxy phosphate which reacts with ammonia to form carbamoyl phosphate. This Leuconostoc mesenteroides subsp. mesenteroides (strain ATCC 8293 / DSM 20343 / BCRC 11652 / CCM 1803 / JCM 6124 / NCDO 523 / NBRC 100496 / NCIMB 8023 / NCTC 12954 / NRRL B-1118 / 37Y) protein is Carbamoyl phosphate synthase large chain.